The sequence spans 117 residues: DNA-binding protein DDB_G0278111 (117 aa).

A disordered region spans residues 1–40 (MSSEKEIQQQLSQMQGQGFDPEAQQRQEAQRQEANERRQG). Residues 8–22 (QQQLSQMQGQGFDPE) are compositionally biased toward low complexity. Positions 23–39 (AQQRQEAQRQEANERRQ) are enriched in basic and acidic residues.

Belongs to the PDCD5 family.

This Dictyostelium discoideum (Social amoeba) protein is DNA-binding protein DDB_G0278111.